Consider the following 324-residue polypeptide: NADH-cytochrome b5 reductase 1 (324 aa).

The chain crosses the membrane as a helical span at residues 49-69 (LNIVLAFVVGLIGSVVVLLYF). An FAD-binding FR-type domain is found at 81-184 (TQWQQYRLME…KGPKGQMRYA (104 aa)). FAD contacts are provided by residues 164–179 (GSMKIGDLLSVKGPKG) and 190–222 (HIGMIAGGTGLTPCLQIIRAALKNPADKTQIDF).

This sequence belongs to the flavoprotein pyridine nucleotide cytochrome reductase family. Monomer. Component of the 2-(3-amino-3-carboxypropyl)histidine synthase complex composed of DPH1, DPH2, DPH3 and a NADH-dependent reductase, predominantly CBR1. Requires FAD as cofactor.

The protein resides in the mitochondrion outer membrane. It catalyses the reaction 2 Fe(III)-[cytochrome b5] + NADH = 2 Fe(II)-[cytochrome b5] + NAD(+) + H(+). It carries out the reaction 2 Fe(3+)-[Dph3] + NADH = 2 Fe(2+)-[Dph3] + NAD(+) + H(+). Its pathway is protein modification; peptidyl-diphthamide biosynthesis. Its function is as follows. NADH-dependent reductase for DPH3 and cytochrome b5. Required for the first step of diphthamide biosynthesis, a post-translational modification of histidine which occurs in elongation factor 2. DPH1 and DPH2 transfer a 3-amino-3-carboxypropyl (ACP) group from S-adenosyl-L-methionine (SAM) to a histidine residue, the reaction is assisted by a reduction system comprising DPH3 and a NADH-dependent reductase, predominantly CBR1. By reducing DPH3, also involved in the formation of the tRNA wobble base modification mcm5s 2U (5-methoxycarbonylmethyl-2-thiouridine), mediated by the elongator complex. The cytochrome b5/NADH cytochrome b5 reductase electron transfer system supports the catalytic activity of several sterol biosynthetic enzymes. The sequence is that of NADH-cytochrome b5 reductase 1 (CBR1) from Mycosarcoma maydis (Corn smut fungus).